Reading from the N-terminus, the 370-residue chain is 3-isopropylmalate dehydrogenase 2 (370 aa).

77-90 contributes to the NAD(+) binding site; sequence GPKWDAVPYEVRPE. 4 residues coordinate substrate: Arg-97, Arg-107, Arg-135, and Asp-226. The Mg(2+) site is built by Asp-226, Asp-250, and Asp-254. 290-302 is an NAD(+) binding site; it reads GSAPDIAGKGLAN.

Belongs to the isocitrate and isopropylmalate dehydrogenases family. LeuB type 1 subfamily. Homodimer. Mg(2+) is required as a cofactor. The cofactor is Mn(2+).

It is found in the cytoplasm. It catalyses the reaction (2R,3S)-3-isopropylmalate + NAD(+) = 4-methyl-2-oxopentanoate + CO2 + NADH. The protein operates within amino-acid biosynthesis; L-leucine biosynthesis; L-leucine from 3-methyl-2-oxobutanoate: step 3/4. Functionally, catalyzes the oxidation of 3-carboxy-2-hydroxy-4-methylpentanoate (3-isopropylmalate) to 3-carboxy-4-methyl-2-oxopentanoate. The product decarboxylates to 4-methyl-2 oxopentanoate. The polypeptide is 3-isopropylmalate dehydrogenase 2 (Bradyrhizobium diazoefficiens (strain JCM 10833 / BCRC 13528 / IAM 13628 / NBRC 14792 / USDA 110)).